The following is a 461-amino-acid chain: MKLWGGRFEKSTDALVEDFHSSISFDQRLYKQDIQGSIAHARMLGEIGVLTSAEAQQIIEGLKGILTDIREGKIQFEIGAEDIHMNVEKLLTERVGTVGKKVHTGRSRNDQVALDLRLFLREEIDHTQELLIALLRTVLDLAKEHQETYMPGYTHLQKAQPISFAHHMMAYAQMFLRDLGRLKDTRQRLNVSPLGSGALAGTTFPLEREMVAQELGFDGITWNSLDGVSDRDFALEFLSAASILMMHLSRLCEELVLWSTGEFQFVIMDDGYSTGSSIMPQKKNPDVAELVRGKTGRVYGDLVALLTVMKGLPLAYNKDMQEDKEQVFDAVDTIQKSLLVVEPMLRTMKVNKKAMAEGAKGGFTNATDLADYLAKKNVPFREAHEIVGKLVLYCSKRGCGLEDLTLKEFQEHSDVFAEDLFESIGIEYCVRQRHIPGGPSPESVAQAILWTEHILEQFTGG.

This sequence belongs to the lyase 1 family. Argininosuccinate lyase subfamily.

It localises to the cytoplasm. The enzyme catalyses 2-(N(omega)-L-arginino)succinate = fumarate + L-arginine. It participates in amino-acid biosynthesis; L-arginine biosynthesis; L-arginine from L-ornithine and carbamoyl phosphate: step 3/3. This Desulfitobacterium hafniense (strain DSM 10664 / DCB-2) protein is Argininosuccinate lyase.